We begin with the raw amino-acid sequence, 266 residues long: Putative pyruvate, phosphate dikinase regulatory protein (266 aa).

147–154 (GLSRTSKT) serves as a coordination point for ADP.

This sequence belongs to the pyruvate, phosphate/water dikinase regulatory protein family. PDRP subfamily.

It carries out the reaction N(tele)-phospho-L-histidyl/L-threonyl-[pyruvate, phosphate dikinase] + ADP = N(tele)-phospho-L-histidyl/O-phospho-L-threonyl-[pyruvate, phosphate dikinase] + AMP + H(+). The enzyme catalyses N(tele)-phospho-L-histidyl/O-phospho-L-threonyl-[pyruvate, phosphate dikinase] + phosphate + H(+) = N(tele)-phospho-L-histidyl/L-threonyl-[pyruvate, phosphate dikinase] + diphosphate. Functionally, bifunctional serine/threonine kinase and phosphorylase involved in the regulation of the pyruvate, phosphate dikinase (PPDK) by catalyzing its phosphorylation/dephosphorylation. The protein is Putative pyruvate, phosphate dikinase regulatory protein of Clostridium perfringens (strain 13 / Type A).